A 272-amino-acid chain; its full sequence is Proteasome subunit beta (272 aa).

A propeptide spans 1–47 (MSTGGDRLPEAFLRPGSSSFVEFLREVAPQSHPEHARPAGAGDVVHA) (removed in mature form; by autocatalysis). The active-site Nucleophile is the T48.

Belongs to the peptidase T1B family. In terms of assembly, the 20S proteasome core is composed of 14 alpha and 14 beta subunits that assemble into four stacked heptameric rings, resulting in a barrel-shaped structure. The two inner rings, each composed of seven catalytic beta subunits, are sandwiched by two outer rings, each composed of seven alpha subunits. The catalytic chamber with the active sites is on the inside of the barrel. Has a gated structure, the ends of the cylinder being occluded by the N-termini of the alpha-subunits. Is capped by the proteasome-associated ATPase, ARC.

It localises to the cytoplasm. It catalyses the reaction Cleavage of peptide bonds with very broad specificity.. It functions in the pathway protein degradation; proteasomal Pup-dependent pathway. The formation of the proteasomal ATPase ARC-20S proteasome complex, likely via the docking of the C-termini of ARC into the intersubunit pockets in the alpha-rings, may trigger opening of the gate for substrate entry. Interconversion between the open-gate and close-gate conformations leads to a dynamic regulation of the 20S proteasome proteolysis activity. In terms of biological role, component of the proteasome core, a large protease complex with broad specificity involved in protein degradation. The polypeptide is Proteasome subunit beta (Beutenbergia cavernae (strain ATCC BAA-8 / DSM 12333 / CCUG 43141 / JCM 11478 / NBRC 16432 / NCIMB 13614 / HKI 0122)).